The primary structure comprises 324 residues: Zinc finger C2HC domain-containing protein 1A (324 aa).

The C2HC/C3H-type 1 zinc finger occupies E15–K44. Residues C19, C22, H34, and C38 each contribute to the Zn(2+) site. Residues T43–K83 are disordered. A compositionally biased stretch (basic and acidic residues) spans T48–G58. The C2HC/C3H-type 2 zinc-finger motif lies at D118–R147. Zn(2+) contacts are provided by C122, C125, H137, and C141. Disordered stretches follow at residues N150–S224 and N236–K259. 2 stretches are compositionally biased toward low complexity: residues S176–S187 and G196–G215. Phosphoserine is present on S222. T243 carries the post-translational modification Phosphothreonine. Phosphoserine is present on S291.

This sequence belongs to the ZC2HC1 family. Requires Zn(2+) as cofactor.

The polypeptide is Zinc finger C2HC domain-containing protein 1A (ZC2HC1A) (Pongo abelii (Sumatran orangutan)).